The sequence spans 203 residues: Ribosome maturation factor RimP (203 aa).

The tract at residues 184–203 (RRGSAPVEDEEGEGEAPTAH) is disordered.

It belongs to the RimP family.

The protein resides in the cytoplasm. Required for maturation of 30S ribosomal subunits. The polypeptide is Ribosome maturation factor RimP (Methylobacterium nodulans (strain LMG 21967 / CNCM I-2342 / ORS 2060)).